The sequence spans 290 residues: MDLTNATIITAMVTPFQESGEIDFDKLPQLVDYLLANHTEGVILAGTTGESPTLTHEEELQLFQRIIELIDGRIPIICGVGTNDTRDSVAFVKELATIAGIDAVLAVVPYYNKPNQEGMYQHFKTIAEASELPIILYNVPGRTAACLEVETTLRLAQLEKIVAIKECAGLDAITELIERAPKDFLVYTGEDGLAFATKALGGQGVISVASHVFGSSMYEMYQALEQGNLPEAAKIQRQLLPKMNALFSVPSPAPVKAALNHLGIPVGNLRLPLVACTPEEEQRIIRTLEI.

Threonine 48 contacts pyruvate. Residue tyrosine 137 is the Proton donor/acceptor of the active site. The Schiff-base intermediate with substrate role is filled by lysine 165. Isoleucine 206 lines the pyruvate pocket.

This sequence belongs to the DapA family. As to quaternary structure, homotetramer; dimer of dimers.

It localises to the cytoplasm. The catalysed reaction is L-aspartate 4-semialdehyde + pyruvate = (2S,4S)-4-hydroxy-2,3,4,5-tetrahydrodipicolinate + H2O + H(+). Its pathway is amino-acid biosynthesis; L-lysine biosynthesis via DAP pathway; (S)-tetrahydrodipicolinate from L-aspartate: step 3/4. In terms of biological role, catalyzes the condensation of (S)-aspartate-beta-semialdehyde [(S)-ASA] and pyruvate to 4-hydroxy-tetrahydrodipicolinate (HTPA). The protein is 4-hydroxy-tetrahydrodipicolinate synthase of Enterococcus faecalis (strain ATCC 700802 / V583).